Here is a 133-residue protein sequence, read N- to C-terminus: Small ribosomal subunit protein uS12c (133 aa).

This sequence belongs to the universal ribosomal protein uS12 family. As to quaternary structure, part of the 30S ribosomal subunit.

It is found in the plastid. It localises to the chloroplast. Functionally, with S4 and S5 plays an important role in translational accuracy. Located at the interface of the 30S and 50S subunits. This chain is Small ribosomal subunit protein uS12c (rps12), found in Chlamydomonas reinhardtii (Chlamydomonas smithii).